A 3623-amino-acid polypeptide reads, in one-letter code: Cubilin (3623 aa).

The N-terminal stretch at 1-20 (MSSQFLWGFVTLLMIAELDG) is a signal peptide. The propeptide at 21–32 (KTGKPEQRGQKR) is removed in mature form. Positions 39–46 (PRMTTEEG) are interaction with AMN. A glycan (N-linked (GlcNAc...) asparagine) is linked at Asn95. One can recognise an EGF-like 1 domain in the interval 129–165 (ERKVCSSNPCLNGGTCVNLHDSFVCICPSQWKGLFCS). 9 disulfide bridges follow: Cys133–Cys144, Cys138–Cys153, Cys155–Cys164, Cys171–Cys187, Cys181–Cys196, Cys198–Cys207, Cys264–Cys277, Cys271–Cys286, and Cys289–Cys300. An EGF-like 2; calcium-binding domain is found at 167–208 (DVNECVVYSGTPFGCQSGSTCVNTVGSFRCDCTPDTYGPQCA). One can recognise an EGF-like 3; calcium-binding domain in the interval 260–301 (DKDECSLQPSPCSEHAQCFNTQGSFYCGACPKGWQGNGYECQ). The 44-residue stretch at 302–345 (DINECEINNGGCSQAPLVPCLNTPGSFSCGNCPAGFSGDGRVCT) folds into the EGF-like 4; calcium-binding domain. 2 EGF-like domains span residues 346 to 385 (PVDI…YTGN) and 395 to 430 (LSNI…QNCT). Intrachain disulfides connect Cys350/Cys363, Cys357/Cys376, Cys399/Cys409, Cys404/Cys418, Cys420/Cys429, Cys436/Cys447, Cys441/Cys456, Cys458/Cys467, Cys474/Cys500, Cys527/Cys549, Cys590/Cys616, Cys643/Cys665, and Cys708/Cys734. Residue Asn428 is glycosylated (N-linked (GlcNAc...) asparagine). An EGF-like 7; calcium-binding domain is found at 432–468 (NINDCSSNPCLNGGTCIDGINGFTCDCTSSWTGYYCQ). 27 CUB domains span residues 474–586 (CGGI…WEAK), 590–702 (CGGI…YLTT), 708–816 (CGGN…YQVA), 817–928 (CGGM…FSSD), 932–1042 (CGEV…YEAI), 1048–1161 (CLYD…WDGS), 1165–1277 (CGGN…FRQR), 1278–1389 (CDNV…WFTH), 1391–1506 (CGGE…WRAV), 1510–1619 (CGGI…FREE), 1620–1734 (CGGR…YSAS), 1738–1850 (CGGS…FKNI), 1852–1963 (GNNN…WFAV), 1978–2091 (CGGF…FHKS), 2092–2213 (CGGY…YEAK), 2217–2334 (CGGT…YSIA), 2336–2448 (CGGT…FKSS), 2452–2565 (CGGD…YTST), 2570–2687 (CGGF…YSFT), 2689–2801 (CGGI…WTTN), 2805–2919 (CGGT…FISR), 2920–3035 (CGRT…YRAI), 3037–3150 (CGGI…FRET), 3157–3274 (CGGY…YTFV), 3278–3393 (CGGT…YQIA), 3395–3507 (CNRE…WTSS), and 3511–3623 (CGGT…MWSS). Residue Asn491 is glycosylated (N-linked (GlcNAc...) asparagine). 2 N-linked (GlcNAc...) asparagine glycosylation sites follow: Asn711 and Asn749. Cys761 and Cys779 form a disulfide bridge. N-linked (GlcNAc...) asparagine glycosylation occurs at Asn781. The cysteines at positions 817 and 842 are disulfide-linked. A glycan (N-linked (GlcNAc...) asparagine) is linked at Asn857. 2 disulfide bridges follow: Cys869–Cys891 and Cys932–Cys958. Asn957 is a glycosylation site (N-linked (GlcNAc...) asparagine). Glu980 is a binding site for Ca(2+). A glycan (N-linked (GlcNAc...) asparagine) is linked at Asn984. The cysteines at positions 985 and 1005 are disulfide-linked. Ca(2+)-binding residues include Asp988, Asp1027, and Leu1030. The cysteines at positions 1048 and 1074 are disulfide-linked. Residues Glu1096, Asp1105, and Asp1146 each coordinate Ca(2+). Cysteines 1165 and 1191 form a disulfide. N-linked (GlcNAc...) asparagine glycosylation occurs at Asn1168. Glu1213, Asp1221, Asp1262, Gly1264, and Gln1265 together coordinate Ca(2+). Residues Cys1218 and Cys1240 are joined by a disulfide bond. Cys1278 and Cys1306 are disulfide-bonded. Asn1285, Asn1307, and Asn1319 each carry an N-linked (GlcNAc...) asparagine glycan. Glu1328 is a binding site for Ca(2+). Asn1332 carries an N-linked (GlcNAc...) asparagine glycan. The cysteines at positions 1333 and 1351 are disulfide-linked. The Ca(2+) site is built by Asp1336, Asp1373, and Ile1375. Cystine bridges form between Cys1391/Cys1417 and Cys1444/Cys1466. An N-linked (GlcNAc...) asparagine glycan is attached at Asn1500. Cys1510 and Cys1536 are oxidised to a cystine. N-linked (GlcNAc...) asparagine glycans are attached at residues Asn1551, Asn1646, and Asn1671. An intrachain disulfide couples Cys1620 to Cys1647. 3 cysteine pairs are disulfide-bonded: Cys1675-Cys1697, Cys1738-Cys1764, and Cys1791-Cys1812. N-linked (GlcNAc...) asparagine glycosylation is found at Asn1802 and Asn1819. 3 disulfides stabilise this stretch: Cys1905-Cys1927, Cys1978-Cys2006, and Cys2032-Cys2054. N-linked (GlcNAc...) asparagine glycans are attached at residues Asn2085 and Asn2117. Disulfide bonds link Cys2092–Cys2118 and Cys2217–Cys2247. N-linked (GlcNAc...) asparagine glycosylation is present at Asn2274. 5 disulfide bridges follow: Cys2275–Cys2297, Cys2336–Cys2363, Cys2390–Cys2411, Cys2452–Cys2478, and Cys2505–Cys2527. Residue Asn2400 is glycosylated (N-linked (GlcNAc...) asparagine). 3 N-linked (GlcNAc...) asparagine glycosylation sites follow: Asn2531, Asn2581, and Asn2610. A disulfide bridge links Cys2570 with Cys2599. Intrachain disulfides connect Cys2628-Cys2649, Cys2689-Cys2715, Cys2742-Cys2764, Cys2805-Cys2831, Cys2860-Cys2883, Cys2920-Cys2946, and Cys2977-Cys2999. 4 N-linked (GlcNAc...) asparagine glycosylation sites follow: Asn2813, Asn2875, Asn2945, and Asn2989. Thr3008 carries the phosphothreonine modification. Disulfide bonds link Cys3037–Cys3064 and Cys3091–Cys3113. N-linked (GlcNAc...) asparagine glycans are attached at residues Asn3042, Asn3106, Asn3125, and Asn3165. Disulfide bonds link Cys3157–Cys3185 and Cys3215–Cys3237. N-linked (GlcNAc...) asparagine glycosylation is found at Asn3268, Asn3283, and Asn3290. 2 disulfide bridges follow: Cys3278–Cys3306 and Cys3332–Cys3354. 3 N-linked (GlcNAc...) asparagine glycosylation sites follow: Asn3357, Asn3400, and Asn3430. A disulfide bridge links Cys3395 with Cys3421. Cystine bridges form between Cys3448–Cys3470, Cys3511–Cys3537, and Cys3564–Cys3586. A glycan (N-linked (GlcNAc...) asparagine) is linked at Asn3533.

Interacts with AMN. Component of the cubam complex composed of one CUBN trimer and one AMN chain. The cubam complex can dimerize. Interacts with LRP2 in a dual-receptor complex in a calcium-dependent manner. Found in a complex with PID1/PCLI1, LRP1 and CUBNI. Interacts with LRP1 and PID1/PCLI1. In terms of processing, the precursor is cleaved by a trans-Golgi proteinase furin, removing a propeptide. Post-translationally, N-glycosylated. Expressed to intestinal, renal and yalk sac apical membranes. In kidney, expressed in the proximal tubule.

The protein resides in the cell membrane. It is found in the endosome membrane. Its subcellular location is the lysosome membrane. Endocytic receptor which plays a role in lipoprotein, vitamin and iron metabolism by facilitating their uptake. Acts together with LRP2 to mediate endocytosis of high-density lipoproteins, GC, hemoglobin, ALB, TF and SCGB1A1. Acts together with AMN to mediate endocytosis of the CBLIF-cobalamin complex. Binds to ALB, MB, Kappa and lambda-light chains, TF, hemoglobin, GC, SCGB1A1, APOA1, high density lipoprotein, and the CBLIF-cobalamin complex. Ligand binding requires calcium. Serves as important transporter in several absorptive epithelia, including intestine, renal proximal tubules and embryonic yolk sac. May play an important role in the development of the peri-implantation embryo through internalization of APOA1 and cholesterol. Binds to LGALS3 at the maternal-fetal interface. The chain is Cubilin (Cubn) from Rattus norvegicus (Rat).